Reading from the N-terminus, the 276-residue chain is ADP-dependent (S)-NAD(P)H-hydrate dehydratase (276 aa).

The YjeF C-terminal domain occupies 5 to 269; it reads TPKAMCAWIP…EELPTYLKIF (265 aa). Ala40, Gly103, and His152 together coordinate (6S)-NADPHX. Gly211 provides a ligand contact to AMP. Residue Asp212 coordinates (6S)-NADPHX.

Belongs to the NnrD/CARKD family. In terms of assembly, homotetramer. Requires Mg(2+) as cofactor.

It catalyses the reaction (6S)-NADHX + ADP = AMP + phosphate + NADH + H(+). The catalysed reaction is (6S)-NADPHX + ADP = AMP + phosphate + NADPH + H(+). Catalyzes the dehydration of the S-form of NAD(P)HX at the expense of ADP, which is converted to AMP. Together with NAD(P)HX epimerase, which catalyzes the epimerization of the S- and R-forms, the enzyme allows the repair of both epimers of NAD(P)HX, a damaged form of NAD(P)H that is a result of enzymatic or heat-dependent hydration. The chain is ADP-dependent (S)-NAD(P)H-hydrate dehydratase from Listeria monocytogenes serovar 1/2a (strain ATCC BAA-679 / EGD-e).